The sequence spans 283 residues: MAHKSIVIFSVLAVLCHSASVKVPPIVDSSLPVKFSEVIAEPAPNVPSNLASYAYALDIYVQTTLSQLQCIKQAGYCAVFVRAYNPAGQGSFDTSSCVTIQNAYKAGLGIEIYMTPQPVSNKQGYQQLDEIIQGLTARAITVRAIWIQVTSPTNWPNNANSNINFINSIVSRARQSGLTVGIYTSYYDWNQITTGWSNIGNDVLLWYWNVYSGGVTGETPANFNDFRKFGCWTAPSVKQFAQDETVCGITVNRDVYLAGNVLKAVEEDGKIYAGGFVQGSLKI.

A signal peptide spans 1-18 (MAHKSIVIFSVLAVLCHS). In terms of domain architecture, Ch-type lysozyme spans 53 to 273 (YAYALDIYVQ…AVEEDGKIYA (221 aa)).

Belongs to the glycosyl hydrolase 25 family. In terms of tissue distribution, expressed in intestine. Expressed in rectal gland cells and head neurons.

Plays a role in resistance to Gram-positive bacteria B.thuringiensis and M.nematophilum and Gram-negative bacteria S.boydii or S.flexneri infection and to fungus C.neoformans infection. Plays a role in susceptibility to Gram-negative bacterium S.typhimurium infection. The sequence is that of Lysozyme-like protein 7 from Caenorhabditis elegans.